The chain runs to 324 residues: Putative divalent cation/proton antiporter TMEM165 (324 aa).

An N-terminal signal peptide occupies residues 1-33 (MAAAAPGNGRASAPRLLLLFLVPLLWAPAAVRA). Over 34–89 (GPDEDLSHRNKEPPAPAQQLQPQPVAVQGPEPARVEKIFTPAAPVHTNKEDPATQT) the chain is Lumenal. Over residues 35 to 45 (PDEDLSHRNKE) the composition is skewed to basic and acidic residues. The segment at 35-59 (PDEDLSHRNKEPPAPAQQLQPQPVA) is disordered. A compositionally biased stretch (low complexity) spans 50–59 (AQQLQPQPVA). A helical membrane pass occupies residues 90–110 (NLGFIHAFVAAISVIIVSELG). Over 111 to 126 (DKTFFIAAIMAMRYNR) the chain is Cytoplasmic. A helical membrane pass occupies residues 127–147 (LTVLAGAMLALGLMTCLSVLF). Topologically, residues 148-151 (GYAT) are lumenal. Residues 152 to 172 (TVIPRVYTYYVSTVLFAIFGI) traverse the membrane as a helical segment. Residues 173 to 228 (RMLREGLKMSPDEGQEELEEVQAELKKKDEEFQRTKLLNGPGDVETGTSITVPQKK) lie on the Cytoplasmic side of the membrane. A coiled-coil region spans residues 184 to 211 (DEGQEELEEVQAELKKKDEEFQRTKLLN). The helical transmembrane segment at 229–249 (WLHFISPIFVQALTLTFLAEW) threads the bilayer. Over 250–267 (GDRSQLTTIVLAAREDPY) the chain is Lumenal. A helical membrane pass occupies residues 268–288 (GVAVGGTVGHCLCTGLAVIGG). The Cytoplasmic portion of the chain corresponds to 289 to 299 (RMIAQKISVRT). The chain crosses the membrane as a helical span at residues 300-320 (VTIIGGIVFLAFAFSALFISP). Residues 321 to 324 (DSGF) are Lumenal-facing.

Belongs to the GDT1 family. Ubiquitously expressed.

It localises to the golgi apparatus membrane. It carries out the reaction Ca(2+)(in) + n H(+)(out) = Ca(2+)(out) + n H(+)(in). The enzyme catalyses Mn(2+)(in) + n H(+)(out) = Mn(2+)(out) + n H(+)(in). In terms of biological role, putative divalent cation:proton antiporter that exchanges calcium or manganese ions for protons across the Golgi membrane. Mediates the reversible transport of calcium or manganese to the Golgi lumen driven by the proton gradient and possibly the membrane potential generated by V-ATPase. Provides calcium or manganese cofactors to resident Golgi enzymes and contributes to the maintenance of an acidic luminal Golgi pH required for proper functioning of the secretory pathway. Promotes Ca(2+) storage within the Golgi lumen of the mammary epithelial cells to be then secreted into milk. The transport mechanism and stoichiometry remains to be elucidated. This chain is Putative divalent cation/proton antiporter TMEM165, found in Homo sapiens (Human).